A 503-amino-acid polypeptide reads, in one-letter code: Probable dolichyl pyrophosphate Man9GlcNAc2 alpha-1,3-glucosyltransferase (503 aa).

Residues 1-46 (MKERIKDKAWRPQFIKLNNPDTSKKIVSQKSKKPEIVDLSSPGNND) lie on the Cytoplasmic side of the membrane. The helical transmembrane segment at 47–67 (LVTISILCVLLCFQLAISLNP) threads the bilayer. The Lumenal segment spans residues 68–151 (HSGESQPPMY…SRGYESIAHK (84 aa)). A helical membrane pass occupies residues 152 to 172 (LFMRLSAIIPFYIFYLPPLIF). Topologically, residues 173-181 (YFTRSKKMS) are cytoplasmic. The chain crosses the membrane as a helical span at residues 182–202 (PILYALALLYPSLLVIDNGHF). Residues 203–211 (QYNSISLGL) are Lumenal-facing. The helical transmembrane segment at 212–232 (FLATYMFLTKNFTIIGSILFV) threads the bilayer. At 233–239 (AALNYKQ) the chain is on the cytoplasmic side. Residues 240-257 (MELYHALPVFVFILARSI) form a helical membrane-spanning segment. The Lumenal segment spans residues 258–268 (NKTQLFNSFRR). The helical transmembrane segment at 269–289 (ILTIGLFVVGTFLIIWLPFLL) threads the bilayer. Residues 290–332 (TGTAKDVIIRVFPFNRGLYEDKVASFWCAFSFILKRLPLQSVQ) lie on the Cytoplasmic side of the membrane. Residues 333–353 (IYISTALVLAGSAPSLLVLFL) form a helical membrane-spanning segment. The Lumenal portion of the chain corresponds to 354–359 (RPTEKQ). The chain crosses the membrane as a helical span at residues 360–379 (FRISLTATGLSFFLFSFHVH). The Cytoplasmic segment spans residues 380–382 (EKT). A helical transmembrane segment spans residues 383–403 (ILLAAVPALLLISEYTSLVIW). Residues 404 to 420 (FLNITNISIFSLCVKDN) are Lumenal-facing. A helical membrane pass occupies residues 421–441 (FALSLSFFFAYFVVSYAYTAP). Over 442–443 (RK) the chain is Cytoplasmic. The helical transmembrane segment at 444 to 464 (ISHILTILIGFAICILELYGP) threads the bilayer. The Lumenal segment spans residues 465–474 (SNQRFPHIYQ). Residues 475–495 (LANAFFSCVHFIYFLLYLSFA) traverse the membrane as a helical segment. Over 496–503 (SFEKTKKE) the chain is Cytoplasmic.

It belongs to the ALG6/ALG8 glucosyltransferase family.

It is found in the endoplasmic reticulum membrane. It catalyses the reaction an alpha-D-Man-(1-&gt;2)-alpha-D-Man-(1-&gt;2)-alpha-D-Man-(1-&gt;3)-[alpha-D-Man-(1-&gt;2)-alpha-D-Man-(1-&gt;3)-[alpha-D-Man-(1-&gt;2)-alpha-D-Man-(1-&gt;6)]-alpha-D-Man-(1-&gt;6)]-beta-D-Man-(1-&gt;4)-beta-D-GlcNAc-(1-&gt;4)-alpha-D-GlcNAc-diphospho-di-trans,poly-cis-dolichol + a di-trans,poly-cis-dolichyl beta-D-glucosyl phosphate = an alpha-D-Glc-(1-&gt;3)-alpha-D-Man-(1-&gt;2)-alpha-D-Man-(1-&gt;2)-alpha-D-Man-(1-&gt;3)-[alpha-D-Man-(1-&gt;2)-alpha-D-Man-(1-&gt;3)-[alpha-D-Man-(1-&gt;2)-alpha-D-Man-(1-&gt;6)]-alpha-D-Man-(1-&gt;6)]-beta-D-Man-(1-&gt;4)-beta-D-GlcNAc-(1-&gt;4)-alpha-D-GlcNAc-diphospho-di-trans,poly-cis-dolichol + a di-trans,poly-cis-dolichyl phosphate + H(+). It participates in protein modification; protein glycosylation. In terms of biological role, adds the first glucose residue to the lipid-linked oligosaccharide precursor for N-linked glycosylation. Transfers glucose from dolichyl phosphate glucose (Dol-P-Glc) onto the lipid-linked oligosaccharide Man(9)GlcNAc(2)-PP-Dol. This is Probable dolichyl pyrophosphate Man9GlcNAc2 alpha-1,3-glucosyltransferase from Caenorhabditis elegans.